The following is a 186-amino-acid chain: Ribosome-recycling factor (186 aa).

The protein belongs to the RRF family.

Its subcellular location is the cytoplasm. Responsible for the release of ribosomes from messenger RNA at the termination of protein biosynthesis. May increase the efficiency of translation by recycling ribosomes from one round of translation to another. This chain is Ribosome-recycling factor, found in Bartonella tribocorum (strain CIP 105476 / IBS 506).